A 412-amino-acid chain; its full sequence is Putative disintegrin and metalloproteinase domain-containing protein 5 (412 aa).

In terms of domain architecture, Disintegrin spans 111 to 199 (EKYADTNILL…YCLPDTYVRD (89 aa)). The EGF-like domain occupies 351–385 (NLKLCDASNHCDRHGVCNNFNHCHCEKGYNPPYCQ).

In terms of assembly, interacts with TEX101. In terms of tissue distribution, highly expressed in testis.

This is a non catalytic metalloprotease-like protein. The chain is Putative disintegrin and metalloproteinase domain-containing protein 5 (ADAM5) from Homo sapiens (Human).